The primary structure comprises 244 residues: 5-oxoprolinase subunit A (244 aa).

This sequence belongs to the LamB/PxpA family. Forms a complex composed of PxpA, PxpB and PxpC.

The enzyme catalyses 5-oxo-L-proline + ATP + 2 H2O = L-glutamate + ADP + phosphate + H(+). Functionally, catalyzes the cleavage of 5-oxoproline to form L-glutamate coupled to the hydrolysis of ATP to ADP and inorganic phosphate. This chain is 5-oxoprolinase subunit A, found in Escherichia coli (strain SE11).